The primary structure comprises 540 residues: Probable feruloyl esterase B-1 (540 aa).

The signal sequence occupies residues 1-18 (MLVMQLLLPFLASTAAAA). N-linked (GlcNAc...) asparagine glycans are attached at residues asparagine 28, asparagine 49, asparagine 66, asparagine 95, asparagine 113, and asparagine 195. 2 disulfide bridges follow: cysteine 41/cysteine 90 and cysteine 76/cysteine 129. Cystine bridges form between cysteine 202–cysteine 458, cysteine 271–cysteine 288, and cysteine 297–cysteine 308. Serine 203 serves as the catalytic Acyl-ester intermediate. N-linked (GlcNAc...) asparagine glycosylation is present at asparagine 234. Ca(2+) is bound by residues aspartate 272, aspartate 275, alanine 277, aspartate 279, and isoleucine 281. N-linked (GlcNAc...) asparagine glycosylation is found at asparagine 298, asparagine 328, and asparagine 367. Active-site charge relay system residues include aspartate 417 and histidine 457. Asparagine 506 carries N-linked (GlcNAc...) asparagine glycosylation. Residues cysteine 517 and cysteine 539 are joined by a disulfide bond.

This sequence belongs to the tannase family. In terms of assembly, homodimer.

It is found in the secreted. It catalyses the reaction feruloyl-polysaccharide + H2O = ferulate + polysaccharide.. Its function is as follows. Involved in degradation of plant cell walls. Hydrolyzes the feruloyl-arabinose ester bond in arabinoxylans as well as the feruloyl-galactose and feruloyl-arabinose ester bonds in pectin. This Aspergillus oryzae (strain ATCC 42149 / RIB 40) (Yellow koji mold) protein is Probable feruloyl esterase B-1 (faeB-1).